A 178-amino-acid polypeptide reads, in one-letter code: Large ribosomal subunit protein uL6 (178 aa).

This sequence belongs to the universal ribosomal protein uL6 family. Part of the 50S ribosomal subunit.

Its function is as follows. This protein binds to the 23S rRNA, and is important in its secondary structure. It is located near the subunit interface in the base of the L7/L12 stalk, and near the tRNA binding site of the peptidyltransferase center. This is Large ribosomal subunit protein uL6 from Streptococcus pyogenes serotype M3 (strain ATCC BAA-595 / MGAS315).